Consider the following 810-residue polypeptide: Eukaryotic translation initiation factor 3 subunit C (810 aa).

The segment covering 1 to 11 (MSRFFATNYNY) has biased composition (polar residues). Residues 1–98 (MSRFFATNYN…DSDESDEEDG (98 aa)) are disordered. The span at 12–33 (DETSSSSEEDLLSSSEELLSSS) shows a compositional bias: low complexity. Positions 34 to 58 (EEGELSDDSLFNDESESESDFDSDD) are enriched in acidic residues. A PCI domain is found at 605-780 (YHQHINLDLV…TYIVIEKGDE (176 aa)).

Belongs to the eIF-3 subunit C family. As to quaternary structure, component of the eukaryotic translation initiation factor 3 (eIF-3) complex.

Its subcellular location is the cytoplasm. In terms of biological role, component of the eukaryotic translation initiation factor 3 (eIF-3) complex, which is involved in protein synthesis of a specialized repertoire of mRNAs and, together with other initiation factors, stimulates binding of mRNA and methionyl-tRNAi to the 40S ribosome. The eIF-3 complex specifically targets and initiates translation of a subset of mRNAs involved in cell proliferation. The protein is Eukaryotic translation initiation factor 3 subunit C of Candida glabrata (strain ATCC 2001 / BCRC 20586 / JCM 3761 / NBRC 0622 / NRRL Y-65 / CBS 138) (Yeast).